A 308-amino-acid chain; its full sequence is Ribosomal RNA small subunit methyltransferase H (308 aa).

Residues 46 to 48 (AGH), Asp63, Tyr87, Asp108, and Gln115 contribute to the S-adenosyl-L-methionine site. The segment at 269-308 (TKRPVEASEEERGRNPRARSAKLRAAEKVAAPEGLPEVEV) is disordered. Residues 271–282 (RPVEASEEERGR) show a composition bias toward basic and acidic residues.

The protein belongs to the methyltransferase superfamily. RsmH family.

Its subcellular location is the cytoplasm. The catalysed reaction is cytidine(1402) in 16S rRNA + S-adenosyl-L-methionine = N(4)-methylcytidine(1402) in 16S rRNA + S-adenosyl-L-homocysteine + H(+). Its function is as follows. Specifically methylates the N4 position of cytidine in position 1402 (C1402) of 16S rRNA. The polypeptide is Ribosomal RNA small subunit methyltransferase H (Deinococcus geothermalis (strain DSM 11300 / CIP 105573 / AG-3a)).